The chain runs to 203 residues: Large ribosomal subunit protein bL25 (203 aa).

Belongs to the bacterial ribosomal protein bL25 family. CTC subfamily. As to quaternary structure, part of the 50S ribosomal subunit; part of the 5S rRNA/L5/L18/L25 subcomplex. Contacts the 5S rRNA. Binds to the 5S rRNA independently of L5 and L18.

Its function is as follows. This is one of the proteins that binds to the 5S RNA in the ribosome where it forms part of the central protuberance. The sequence is that of Large ribosomal subunit protein bL25 from Wolbachia pipientis wMel.